The sequence spans 640 residues: Arogenate dehydrogenase 1, chloroplastic (640 aa).

Residues 1–18 (MAETLITKPPLSLSFTSL) constitute a chloroplast transit peptide. 2 Prephenate/arogenate dehydrogenase domains span residues 53-334 (LRIA…GEND) and 365-640 (LKIG…LLTS).

Belongs to the prephenate/arogenate dehydrogenase family. As to expression, expressed in roots, stems, leaves, flowers, siliques and seeds. More abundant in seeds.

It localises to the plastid. Its subcellular location is the chloroplast. The enzyme catalyses L-arogenate + NADP(+) = L-tyrosine + CO2 + NADPH. Its pathway is amino-acid biosynthesis; L-tyrosine biosynthesis; L-tyrosine from L-arogenate (NADP(+) route): step 1/1. Its function is as follows. Involved in the biosynthesis of tyrosine. Has no prephenate dehydrogenase activity. The sequence is that of Arogenate dehydrogenase 1, chloroplastic (TYRAAT1) from Arabidopsis thaliana (Mouse-ear cress).